We begin with the raw amino-acid sequence, 234 residues long: Chromatin remodeling protein EBS (234 aa).

Residues 29–144 enclose the BAH domain; sequence KVVRAGDCVL…AATGAFTPDR (116 aa). The segment at 146 to 197 adopts a PHD-type zinc-finger fold; that stretch reads AVYCKCEMPYNPDDLMVQCEGCKDWYHPACVGMTIEEAKKLDHFVCAECSSD.

The protein belongs to the SHL1/EBS protein family. As to quaternary structure, recognizes di- and trimethylated histone H3 at lysine 4 (H3K4me2 and H3K4me3). Interacts with HDA6. As to expression, expressed ubiquitously, with higher levels in floral buds.

It is found in the nucleus. Its function is as follows. Chromatin remodeling factor that binds to methylated histone (e.g. H3K4me2/3) to prevent their acetylation (e.g. H3K9K14Ac), likely by recruiting histone deacetylase (HDAC) complexes, and thus regulating the transcription of target genes. Negative regulator in developmental processes in a gibberellic acid- (GA-) dependent manner, such as germination, flowering induction, and flower organ specification, probably by modulating developmental gene expression. Involved in the chromatin-mediated repression of floral initiation and controls genes regulating flowering. Negatively regulates the expression of the floral integrator FT epigenetically, by preventing high levels of H3 acetylation, thus maintaining an inactive chromatin conformation at FT locus. The polypeptide is Chromatin remodeling protein EBS (Arabidopsis thaliana (Mouse-ear cress)).